The sequence spans 561 residues: Urocanate hydratase (561 aa).

NAD(+)-binding positions include 52 to 53 (GG), Gln130, 176 to 178 (GMG), Glu196, Arg201, 242 to 243 (NA), 263 to 267 (QTSAH), 273 to 274 (YL), and Tyr322. Residue Cys410 is part of the active site. Gly492 is a binding site for NAD(+).

Belongs to the urocanase family. The cofactor is NAD(+).

It is found in the cytoplasm. It catalyses the reaction 4-imidazolone-5-propanoate = trans-urocanate + H2O. It participates in amino-acid degradation; L-histidine degradation into L-glutamate; N-formimidoyl-L-glutamate from L-histidine: step 2/3. In terms of biological role, catalyzes the conversion of urocanate to 4-imidazolone-5-propionate. This chain is Urocanate hydratase, found in Salmonella arizonae (strain ATCC BAA-731 / CDC346-86 / RSK2980).